We begin with the raw amino-acid sequence, 209 residues long: Uracil phosphoribosyltransferase (209 aa).

Residues Arg79, Arg104, and 131-139 (DPMLATGVS) each bind 5-phospho-alpha-D-ribose 1-diphosphate. Residues Ile194 and 199–201 (GDA) contribute to the uracil site. Residue Asp200 coordinates 5-phospho-alpha-D-ribose 1-diphosphate.

Belongs to the UPRTase family. The cofactor is Mg(2+).

It carries out the reaction UMP + diphosphate = 5-phospho-alpha-D-ribose 1-diphosphate + uracil. The protein operates within pyrimidine metabolism; UMP biosynthesis via salvage pathway; UMP from uracil: step 1/1. With respect to regulation, allosterically activated by GTP. Functionally, catalyzes the conversion of uracil and 5-phospho-alpha-D-ribose 1-diphosphate (PRPP) to UMP and diphosphate. The sequence is that of Uracil phosphoribosyltransferase from Thermotoga neapolitana (strain ATCC 49049 / DSM 4359 / NBRC 107923 / NS-E).